Here is a 149-residue protein sequence, read N- to C-terminus: L-alanine exporter AlaE (149 aa).

The next 4 membrane-spanning stretches (helical) occupy residues 17 to 37 (FAMV…ISGM), 43 to 63 (LASR…YGVF), 86 to 106 (LTAY…TVGA), and 111 to 131 (IITA…FYGY).

It belongs to the AlaE exporter family.

Its subcellular location is the cell inner membrane. Its function is as follows. Exports L-alanine. The polypeptide is L-alanine exporter AlaE (Aliivibrio salmonicida (strain LFI1238) (Vibrio salmonicida (strain LFI1238))).